Here is a 142-residue protein sequence, read N- to C-terminus: Large ribosomal subunit protein uL11 (142 aa).

It belongs to the universal ribosomal protein uL11 family. As to quaternary structure, part of the ribosomal stalk of the 50S ribosomal subunit. Interacts with L10 and the large rRNA to form the base of the stalk. L10 forms an elongated spine to which L12 dimers bind in a sequential fashion forming a multimeric L10(L12)X complex. Post-translationally, one or more lysine residues are methylated.

Forms part of the ribosomal stalk which helps the ribosome interact with GTP-bound translation factors. This chain is Large ribosomal subunit protein uL11, found in Bradyrhizobium sp. (strain ORS 278).